Consider the following 495-residue polypeptide: Acetyl-coenzyme A carboxylase carboxyl transferase subunit beta, chloroplastic (495 aa).

The disordered stretch occupies residues 187–208 (ESRNSSENEGSSRRTRTKGSDL). The 270-residue stretch at 226–495 (LWVQCENCYG…PLNQKSSKIK (270 aa)) folds into the CoA carboxyltransferase N-terminal domain. Zn(2+) contacts are provided by C230, C233, C249, and C252. Residues 230-252 (CENCYGLNYKKFLKSKMNICEQC) form a C4-type zinc finger.

The protein belongs to the AccD/PCCB family. Acetyl-CoA carboxylase is a heterohexamer composed of biotin carboxyl carrier protein, biotin carboxylase and 2 subunits each of ACCase subunit alpha and ACCase plastid-coded subunit beta (accD). Requires Zn(2+) as cofactor. In terms of tissue distribution, RNA expressed in leaf, root and stem; the least expression occurs in stems.

The protein localises to the plastid. It localises to the chloroplast stroma. It catalyses the reaction N(6)-carboxybiotinyl-L-lysyl-[protein] + acetyl-CoA = N(6)-biotinyl-L-lysyl-[protein] + malonyl-CoA. The protein operates within lipid metabolism; malonyl-CoA biosynthesis; malonyl-CoA from acetyl-CoA: step 1/1. Its function is as follows. Component of the acetyl coenzyme A carboxylase (ACC) complex. Biotin carboxylase (BC) catalyzes the carboxylation of biotin on its carrier protein (BCCP) and then the CO(2) group is transferred by the transcarboxylase to acetyl-CoA to form malonyl-CoA. This chain is Acetyl-coenzyme A carboxylase carboxyl transferase subunit beta, chloroplastic, found in Nicotiana tabacum (Common tobacco).